Here is a 280-residue protein sequence, read N- to C-terminus: Large ribosomal subunit protein uL2 (280 aa).

2 disordered regions span residues 1-25 (MGIRKYRPMTPGTRQRSGADFAEVT) and 230-280 (HPHG…SGRG). Over residues 257-280 (KTRKRRKPSSKFIIRRRKTASGRG) the composition is skewed to basic residues.

It belongs to the universal ribosomal protein uL2 family. As to quaternary structure, part of the 50S ribosomal subunit. Forms a bridge to the 30S subunit in the 70S ribosome.

Functionally, one of the primary rRNA binding proteins. Required for association of the 30S and 50S subunits to form the 70S ribosome, for tRNA binding and peptide bond formation. It has been suggested to have peptidyltransferase activity; this is somewhat controversial. Makes several contacts with the 16S rRNA in the 70S ribosome. In Gloeobacter violaceus (strain ATCC 29082 / PCC 7421), this protein is Large ribosomal subunit protein uL2.